The chain runs to 107 residues: U-scoloptoxin(19)-Sm1a (107 aa).

A signal peptide spans 1-20 (MRFLVSVAFLLTVSSLLVSG).

Belongs to the scoloptoxin-19 family. In terms of processing, contains 6 disulfide bonds. In terms of tissue distribution, expressed by the venom gland.

Its subcellular location is the secreted. This is U-scoloptoxin(19)-Sm1a from Scolopendra morsitans (Tanzanian blue ringleg centipede).